Here is a 259-residue protein sequence, read N- to C-terminus: Proteasome subunit alpha (259 aa).

Residues 226 to 259 are disordered; the sequence is LAEGSATSATSATPGEAEAPATAPEGDVDTGSNG. Residues 227–250 show a composition bias toward low complexity; it reads AEGSATSATSATPGEAEAPATAPE.

This sequence belongs to the peptidase T1A family. As to quaternary structure, the 20S proteasome core is composed of 14 alpha and 14 beta subunits that assemble into four stacked heptameric rings, resulting in a barrel-shaped structure. The two inner rings, each composed of seven catalytic beta subunits, are sandwiched by two outer rings, each composed of seven alpha subunits. The catalytic chamber with the active sites is on the inside of the barrel. Has a gated structure, the ends of the cylinder being occluded by the N-termini of the alpha-subunits. Is capped by the proteasome-associated ATPase, ARC.

It is found in the cytoplasm. Its pathway is protein degradation; proteasomal Pup-dependent pathway. Its activity is regulated as follows. The formation of the proteasomal ATPase ARC-20S proteasome complex, likely via the docking of the C-termini of ARC into the intersubunit pockets in the alpha-rings, may trigger opening of the gate for substrate entry. Interconversion between the open-gate and close-gate conformations leads to a dynamic regulation of the 20S proteasome proteolysis activity. Its function is as follows. Component of the proteasome core, a large protease complex with broad specificity involved in protein degradation. The polypeptide is Proteasome subunit alpha (Streptosporangium roseum (strain ATCC 12428 / DSM 43021 / JCM 3005 / KCTC 9067 / NCIMB 10171 / NRRL 2505 / NI 9100)).